The following is a 366-amino-acid chain: tRNA/tmRNA (uracil-C(5))-methyltransferase (366 aa).

Positions 190, 218, 223, 239, and 299 each coordinate S-adenosyl-L-methionine. Cysteine 324 serves as the catalytic Nucleophile. The active-site Proton acceptor is the glutamate 358.

Belongs to the class I-like SAM-binding methyltransferase superfamily. RNA M5U methyltransferase family. TrmA subfamily.

It catalyses the reaction uridine(54) in tRNA + S-adenosyl-L-methionine = 5-methyluridine(54) in tRNA + S-adenosyl-L-homocysteine + H(+). It carries out the reaction uridine(341) in tmRNA + S-adenosyl-L-methionine = 5-methyluridine(341) in tmRNA + S-adenosyl-L-homocysteine + H(+). Dual-specificity methyltransferase that catalyzes the formation of 5-methyluridine at position 54 (m5U54) in all tRNAs, and that of position 341 (m5U341) in tmRNA (transfer-mRNA). The chain is tRNA/tmRNA (uracil-C(5))-methyltransferase from Shigella dysenteriae serotype 1 (strain Sd197).